The following is a 284-amino-acid chain: NAD kinase (284 aa).

Asp-67 (proton acceptor) is an active-site residue. NAD(+) contacts are provided by residues 67–68 (DG), 141–142 (ND), Arg-152, Lys-169, Asp-171, 182–187 (TGYSLS), and Gln-241.

This sequence belongs to the NAD kinase family. A divalent metal cation is required as a cofactor.

It localises to the cytoplasm. The enzyme catalyses NAD(+) + ATP = ADP + NADP(+) + H(+). Involved in the regulation of the intracellular balance of NAD and NADP, and is a key enzyme in the biosynthesis of NADP. Catalyzes specifically the phosphorylation on 2'-hydroxyl of the adenosine moiety of NAD to yield NADP. The chain is NAD kinase from Geotalea daltonii (strain DSM 22248 / JCM 15807 / FRC-32) (Geobacter daltonii).